We begin with the raw amino-acid sequence, 403 residues long: CCA-adding enzyme (403 aa).

The ATP site is built by Gly-32 and Arg-35. CTP-binding residues include Gly-32 and Arg-35. Residues Asp-45 and Asp-47 each coordinate Mg(2+). Arg-116, Asp-159, Arg-162, Arg-165, and Arg-168 together coordinate ATP. Residues Arg-116, Asp-159, Arg-162, Arg-165, and Arg-168 each coordinate CTP.

Belongs to the tRNA nucleotidyltransferase/poly(A) polymerase family. Bacterial CCA-adding enzyme type 3 subfamily. In terms of assembly, homodimer. Mg(2+) is required as a cofactor.

The catalysed reaction is a tRNA precursor + 2 CTP + ATP = a tRNA with a 3' CCA end + 3 diphosphate. It catalyses the reaction a tRNA with a 3' CCA end + 2 CTP + ATP = a tRNA with a 3' CCACCA end + 3 diphosphate. Catalyzes the addition and repair of the essential 3'-terminal CCA sequence in tRNAs without using a nucleic acid template. Adds these three nucleotides in the order of C, C, and A to the tRNA nucleotide-73, using CTP and ATP as substrates and producing inorganic pyrophosphate. tRNA 3'-terminal CCA addition is required both for tRNA processing and repair. Also involved in tRNA surveillance by mediating tandem CCA addition to generate a CCACCA at the 3' terminus of unstable tRNAs. While stable tRNAs receive only 3'-terminal CCA, unstable tRNAs are marked with CCACCA and rapidly degraded. The sequence is that of CCA-adding enzyme from Leuconostoc citreum (strain KM20).